Consider the following 504-residue polypeptide: Anaerobic nitric oxide reductase transcription regulator NorR (504 aa).

The residue at position 57 (D57) is a 4-aspartylphosphate. One can recognise a Sigma-54 factor interaction domain in the interval M187–V416. Residues G215–E222 and A278–E287 contribute to the ATP site. The segment at residues W479–K498 is a DNA-binding region (H-T-H motif).

It participates in nitrogen metabolism; nitric oxide reduction. Required for the expression of anaerobic nitric oxide (NO) reductase, acts as a transcriptional activator for at least the norVW operon. Activation also requires sigma-54. This is Anaerobic nitric oxide reductase transcription regulator NorR from Escherichia coli (strain SMS-3-5 / SECEC).